The sequence spans 186 residues: TATA box-binding protein-like 1 (186 aa).

This sequence belongs to the TBP family.

Its subcellular location is the cytoplasm. It is found in the nucleus. In terms of biological role, part of a specialized transcription system that mediates the transcription of most ribosomal proteins through the 5'-TCT-3' motif which is a core promoter element at these genes. Seems to also mediate the transcription of NF1. Does not bind the TATA box. Members of the TBP family are differentially required to regulate transcription and development during early embryogenesis. The polypeptide is TATA box-binding protein-like 1 (Danio rerio (Zebrafish)).